We begin with the raw amino-acid sequence, 421 residues long: Serine/threonine-protein kinase OXI1 (421 aa).

The region spanning 17–329 (LEVLSLLGRG…VEEIKGHDFF (313 aa)) is the Protein kinase domain. Residues 23-31 (LGRGAKGVV) and K45 each bind ATP. Catalysis depends on D149, which acts as the Proton acceptor. The segment at 167–246 (DFDLSTNLAP…VGTEEYVAPE (80 aa)) is activation loop. Position 235 is a phosphoserine; by PDPK1 (S235). Residues 330–421 (RGVDWEKVIL…LESDNNFLVF (92 aa)) form the AGC-kinase C-terminal domain. The PIF signature appears at 418 to 421 (FLVF).

The protein belongs to the protein kinase superfamily. AGC Ser/Thr protein kinase family. Interacts with PDK1 and PDK2. In terms of tissue distribution, expressed in roots and root hair cells.

The catalysed reaction is L-seryl-[protein] + ATP = O-phospho-L-seryl-[protein] + ADP + H(+). It carries out the reaction L-threonyl-[protein] + ATP = O-phospho-L-threonyl-[protein] + ADP + H(+). Activated in response to hydrogen peroxide and cellulase elicitor. Activated by PDK1 in a phosphatidic acid dependent manner. Involved in oxidative burst-mediated signaling. Required for basal resistance to P.parasitica infection and root hair growth. Partly required for the activation of MPK3 and MPK6 by hydrogen peroxide and cellulase elicitor. This Arabidopsis thaliana (Mouse-ear cress) protein is Serine/threonine-protein kinase OXI1.